The following is a 271-amino-acid chain: MTIVSAFLVPGSPLPHLRPDVKSWESFKVAMQNVGEKLRASKPDVVLIYSTQWFAVLDEIWLTRQRSLDIHVDENWHEFGELPYDIYSDVDLANACIESCRAAGVNARGADYESFPIDTGTIVACNALKVGTSDLPVVVASNNLYDDQAATERLAALAVACISEKGKRIAVIGVGGLSGSVFTTAIDPAEDRVVKAVEDDCNKNILSLMESGNIQALREALKSYSKEARAEMGFKHFHWLLGALDGHFKGATVHHYGALYGSGAAVVEFSI.

It belongs to the LigB/MhpB extradiol dioxygenase family. In terms of assembly, heterotetramer of 2 alpha and 2 beta subunits.

Component of the 2-aminophenol 1,6-dioxygenase complex that catalyzes the ring fission of 2-aminophenol to produce 2-aminomuconic 6-semialdehyde. AmnA seems to have a role in the stability of the complex. The polypeptide is 2-aminophenol 1,6-dioxygenase alpha subunit (amnA) (Pseudomonas sp).